Consider the following 135-residue polypeptide: Ribosome-binding factor A (135 aa).

The protein belongs to the RbfA family. Monomer. Binds 30S ribosomal subunits, but not 50S ribosomal subunits or 70S ribosomes.

Its subcellular location is the cytoplasm. In terms of biological role, one of several proteins that assist in the late maturation steps of the functional core of the 30S ribosomal subunit. Associates with free 30S ribosomal subunits (but not with 30S subunits that are part of 70S ribosomes or polysomes). Required for efficient processing of 16S rRNA. May interact with the 5'-terminal helix region of 16S rRNA. In Caldicellulosiruptor saccharolyticus (strain ATCC 43494 / DSM 8903 / Tp8T 6331), this protein is Ribosome-binding factor A.